Here is a 403-residue protein sequence, read N- to C-terminus: Imidazolonepropionase (403 aa).

His69 and His71 together coordinate Fe(3+). His69 and His71 together coordinate Zn(2+). 4-imidazolone-5-propanoate-binding residues include Arg78, Tyr141, and His174. Tyr141 provides a ligand contact to N-formimidoyl-L-glutamate. His239 serves as a coordination point for Fe(3+). His239 contacts Zn(2+). Residue Gln242 coordinates 4-imidazolone-5-propanoate. Asp314 provides a ligand contact to Fe(3+). Asp314 contacts Zn(2+). The N-formimidoyl-L-glutamate site is built by Asn316 and Gly318. Position 319 (Ser319) interacts with 4-imidazolone-5-propanoate.

It belongs to the metallo-dependent hydrolases superfamily. HutI family. It depends on Zn(2+) as a cofactor. Fe(3+) is required as a cofactor.

The protein resides in the cytoplasm. The enzyme catalyses 4-imidazolone-5-propanoate + H2O = N-formimidoyl-L-glutamate. Its pathway is amino-acid degradation; L-histidine degradation into L-glutamate; N-formimidoyl-L-glutamate from L-histidine: step 3/3. In terms of biological role, catalyzes the hydrolytic cleavage of the carbon-nitrogen bond in imidazolone-5-propanoate to yield N-formimidoyl-L-glutamate. It is the third step in the universal histidine degradation pathway. In Legionella pneumophila (strain Corby), this protein is Imidazolonepropionase.